Here is a 61-residue protein sequence, read N- to C-terminus: Small ribosomal subunit protein uS14 (61 aa).

Residues Cys-24, Cys-27, Cys-40, and Cys-43 each coordinate Zn(2+).

It belongs to the universal ribosomal protein uS14 family. Zinc-binding uS14 subfamily. Part of the 30S ribosomal subunit. Contacts proteins S3 and S10. Requires Zn(2+) as cofactor.

Functionally, binds 16S rRNA, required for the assembly of 30S particles and may also be responsible for determining the conformation of the 16S rRNA at the A site. The polypeptide is Small ribosomal subunit protein uS14 (Roseiflexus sp. (strain RS-1)).